Reading from the N-terminus, the 365-residue chain is Caffeic acid 3-O-methyltransferase (365 aa).

A substrate-binding site is contributed by 130 to 136; the sequence is MNQDKVL. Residues 162–180 are substrate binding; that stretch reads AFEYHGTDPRFNKVFNRGM. Residues glycine 208, aspartate 231, aspartate 251, methionine 252, and lysine 265 each coordinate S-adenosyl-L-methionine. Histidine 269 serves as the catalytic Proton acceptor.

The protein belongs to the class I-like SAM-binding methyltransferase superfamily. Cation-independent O-methyltransferase family. COMT subfamily. As to quaternary structure, homodimer.

The catalysed reaction is (E)-caffeate + S-adenosyl-L-methionine = (E)-ferulate + S-adenosyl-L-homocysteine + H(+). It participates in aromatic compound metabolism; phenylpropanoid biosynthesis. Catalyzes the conversion of caffeic acid to ferulic acid and of 5-hydroxyferulic acid to sinapic acid. The resulting products may subsequently be converted to the corresponding alcohols that are incorporated into lignins. The protein is Caffeic acid 3-O-methyltransferase (COMT1) of Prunus dulcis (Almond).